A 234-amino-acid polypeptide reads, in one-letter code: Proteasome subunit beta (234 aa).

The segment at 1 to 35 (MNPDLNMNPHDSGRTDPYAPELGEIATDEGDGENV) is disordered. Residues 1-39 (MNPDLNMNPHDSGRTDPYAPELGEIATDEGDGENVTKTG) constitute a propeptide, removed in mature form; by autocatalysis. Residue Thr-40 is the Nucleophile of the active site.

This sequence belongs to the peptidase T1B family. In terms of assembly, the 20S proteasome core is composed of 14 alpha and 14 beta subunits that assemble into four stacked heptameric rings, resulting in a barrel-shaped structure. The two inner rings, each composed of seven catalytic beta subunits, are sandwiched by two outer rings, each composed of seven alpha subunits. The catalytic chamber with the active sites is on the inside of the barrel. Has a gated structure, the ends of the cylinder being occluded by the N-termini of the alpha-subunits. Is capped at one or both ends by the proteasome regulatory ATPase, PAN.

The protein resides in the cytoplasm. It catalyses the reaction Cleavage of peptide bonds with very broad specificity.. Its activity is regulated as follows. The formation of the proteasomal ATPase PAN-20S proteasome complex, via the docking of the C-termini of PAN into the intersubunit pockets in the alpha-rings, triggers opening of the gate for substrate entry. Interconversion between the open-gate and close-gate conformations leads to a dynamic regulation of the 20S proteasome proteolysis activity. Its function is as follows. Component of the proteasome core, a large protease complex with broad specificity involved in protein degradation. The sequence is that of Proteasome subunit beta from Halorhabdus utahensis (strain DSM 12940 / JCM 11049 / AX-2).